Reading from the N-terminus, the 176-residue chain is Probable chemoreceptor glutamine deamidase CheD (176 aa).

It belongs to the CheD family.

It catalyses the reaction L-glutaminyl-[protein] + H2O = L-glutamyl-[protein] + NH4(+). Probably deamidates glutamine residues to glutamate on methyl-accepting chemotaxis receptors (MCPs), playing an important role in chemotaxis. In Rhodospirillum rubrum (strain ATCC 11170 / ATH 1.1.1 / DSM 467 / LMG 4362 / NCIMB 8255 / S1), this protein is Probable chemoreceptor glutamine deamidase CheD.